Reading from the N-terminus, the 719-residue chain is Probable 1-deoxy-D-xylulose-5-phosphate synthase, chloroplastic (719 aa).

Residues 1 to 57 (MALCAYAFPGILNRTVAVASDASKPTPLFSEWIHGTDLQFQFHQKLTQVKKRSRTVQ) constitute a chloroplast transit peptide. Thiamine diphosphate is bound by residues histidine 145 and 186–188 (GHS). A Mg(2+)-binding site is contributed by aspartate 217. Thiamine diphosphate-binding positions include 218–219 (GA), asparagine 246, tyrosine 367, and glutamate 449. Asparagine 246 is a Mg(2+) binding site.

It belongs to the transketolase family. DXPS subfamily. In terms of assembly, homodimer. Requires Mg(2+) as cofactor. It depends on thiamine diphosphate as a cofactor.

Its subcellular location is the plastid. It is found in the chloroplast. It catalyses the reaction D-glyceraldehyde 3-phosphate + pyruvate + H(+) = 1-deoxy-D-xylulose 5-phosphate + CO2. It functions in the pathway metabolic intermediate biosynthesis; 1-deoxy-D-xylulose 5-phosphate biosynthesis; 1-deoxy-D-xylulose 5-phosphate from D-glyceraldehyde 3-phosphate and pyruvate: step 1/1. Catalyzes the acyloin condensation reaction between C atoms 2 and 3 of pyruvate and glyceraldehyde 3-phosphate to yield 1-deoxy-D-xylulose-5-phosphate (DXP). This Capsicum annuum (Capsicum pepper) protein is Probable 1-deoxy-D-xylulose-5-phosphate synthase, chloroplastic (TKT2).